Consider the following 480-residue polypeptide: Protein nucleotidyltransferase YdiU (480 aa).

Gly-87, Gly-89, Arg-90, Lys-110, Asp-122, Gly-123, Arg-173, and Arg-180 together coordinate ATP. The active-site Proton acceptor is the Asp-249. Residues Asn-250 and Asp-259 each contribute to the Mg(2+) site. Asp-259 is an ATP binding site.

Belongs to the SELO family. Requires Mg(2+) as cofactor. Mn(2+) serves as cofactor.

It carries out the reaction L-seryl-[protein] + ATP = 3-O-(5'-adenylyl)-L-seryl-[protein] + diphosphate. It catalyses the reaction L-threonyl-[protein] + ATP = 3-O-(5'-adenylyl)-L-threonyl-[protein] + diphosphate. The enzyme catalyses L-tyrosyl-[protein] + ATP = O-(5'-adenylyl)-L-tyrosyl-[protein] + diphosphate. The catalysed reaction is L-histidyl-[protein] + UTP = N(tele)-(5'-uridylyl)-L-histidyl-[protein] + diphosphate. It carries out the reaction L-seryl-[protein] + UTP = O-(5'-uridylyl)-L-seryl-[protein] + diphosphate. It catalyses the reaction L-tyrosyl-[protein] + UTP = O-(5'-uridylyl)-L-tyrosyl-[protein] + diphosphate. Nucleotidyltransferase involved in the post-translational modification of proteins. It can catalyze the addition of adenosine monophosphate (AMP) or uridine monophosphate (UMP) to a protein, resulting in modifications known as AMPylation and UMPylation. This is Protein nucleotidyltransferase YdiU from Anoxybacillus flavithermus (strain DSM 21510 / WK1).